Consider the following 521-residue polypeptide: Bifunctional purine biosynthesis protein PurH (521 aa).

An MGS-like domain is found at 1–145; the sequence is MIKQALISVS…KNHRDVTVVV (145 aa).

Belongs to the PurH family.

It carries out the reaction (6R)-10-formyltetrahydrofolate + 5-amino-1-(5-phospho-beta-D-ribosyl)imidazole-4-carboxamide = 5-formamido-1-(5-phospho-D-ribosyl)imidazole-4-carboxamide + (6S)-5,6,7,8-tetrahydrofolate. The catalysed reaction is IMP + H2O = 5-formamido-1-(5-phospho-D-ribosyl)imidazole-4-carboxamide. It functions in the pathway purine metabolism; IMP biosynthesis via de novo pathway; 5-formamido-1-(5-phospho-D-ribosyl)imidazole-4-carboxamide from 5-amino-1-(5-phospho-D-ribosyl)imidazole-4-carboxamide (10-formyl THF route): step 1/1. It participates in purine metabolism; IMP biosynthesis via de novo pathway; IMP from 5-formamido-1-(5-phospho-D-ribosyl)imidazole-4-carboxamide: step 1/1. The protein is Bifunctional purine biosynthesis protein PurH of Burkholderia vietnamiensis (strain G4 / LMG 22486) (Burkholderia cepacia (strain R1808)).